Here is a 201-residue protein sequence, read N- to C-terminus: Probable chemoreceptor glutamine deamidase CheD 1 (201 aa).

The protein belongs to the CheD family.

The catalysed reaction is L-glutaminyl-[protein] + H2O = L-glutamyl-[protein] + NH4(+). Functionally, probably deamidates glutamine residues to glutamate on methyl-accepting chemotaxis receptors (MCPs), playing an important role in chemotaxis. This Geobacter sulfurreducens (strain ATCC 51573 / DSM 12127 / PCA) protein is Probable chemoreceptor glutamine deamidase CheD 1.